Reading from the N-terminus, the 335-residue chain is Ketol-acid reductoisomerase (NADP(+)) (335 aa).

The KARI N-terminal Rossmann domain maps to 2 to 182 (VEMFYDKDAD…GCTRAGVIET (181 aa)). NADP(+)-binding positions include 25–28 (YGSQ), Arg-48, Ser-51, and 83–86 (DEIQ). His-108 is a catalytic residue. Position 134 (Gly-134) interacts with NADP(+). The KARI C-terminal knotted domain occupies 183 to 328 (TFREETETDL…KKLRAMMPWL (146 aa)). Residues Asp-191, Glu-195, Glu-227, and Glu-231 each coordinate Mg(2+). Substrate is bound at residue Ser-252.

It belongs to the ketol-acid reductoisomerase family. Requires Mg(2+) as cofactor.

The enzyme catalyses (2R)-2,3-dihydroxy-3-methylbutanoate + NADP(+) = (2S)-2-acetolactate + NADPH + H(+). It catalyses the reaction (2R,3R)-2,3-dihydroxy-3-methylpentanoate + NADP(+) = (S)-2-ethyl-2-hydroxy-3-oxobutanoate + NADPH + H(+). Its pathway is amino-acid biosynthesis; L-isoleucine biosynthesis; L-isoleucine from 2-oxobutanoate: step 2/4. The protein operates within amino-acid biosynthesis; L-valine biosynthesis; L-valine from pyruvate: step 2/4. In terms of biological role, involved in the biosynthesis of branched-chain amino acids (BCAA). Catalyzes an alkyl-migration followed by a ketol-acid reduction of (S)-2-acetolactate (S2AL) to yield (R)-2,3-dihydroxy-isovalerate. In the isomerase reaction, S2AL is rearranged via a Mg-dependent methyl migration to produce 3-hydroxy-3-methyl-2-ketobutyrate (HMKB). In the reductase reaction, this 2-ketoacid undergoes a metal-dependent reduction by NADPH to yield (R)-2,3-dihydroxy-isovalerate. The polypeptide is Ketol-acid reductoisomerase (NADP(+)) (Methanococcoides burtonii (strain DSM 6242 / NBRC 107633 / OCM 468 / ACE-M)).